The following is a 238-amino-acid chain: Dolichyldiphosphatase 1 (238 aa).

Helical transmembrane passes span 33–53 (LAYL…LIIF), 100–120 (PSSH…FLYL), 130–150 (FLDL…AFLV), and 162–182 (WSQV…WFIF).

It belongs to the dolichyldiphosphatase family.

It localises to the endoplasmic reticulum membrane. It catalyses the reaction a di-trans,poly-cis-dolichyl diphosphate + H2O = a di-trans,poly-cis-dolichyl phosphate + phosphate + H(+). It participates in protein modification; protein glycosylation. Its function is as follows. Required for efficient N-glycosylation. Necessary for maintaining optimal levels of dolichol-linked oligosaccharides. Hydrolyzes dolichyl pyrophosphate at a very high rate and dolichyl monophosphate at a much lower rate. Does not act on phosphatidate. The chain is Dolichyldiphosphatase 1 (DOLPP1) from Homo sapiens (Human).